A 241-amino-acid chain; its full sequence is Small ribosomal subunit protein uS2 (241 aa).

Belongs to the universal ribosomal protein uS2 family.

The sequence is that of Small ribosomal subunit protein uS2 from Escherichia coli (strain 55989 / EAEC).